The chain runs to 347 residues: MKQTIILLYGGRSAEREVSVLSAESVMRAVNYDRFTVKTFFISQSGDSIKTQEFSHAPGQEDRLMTNETIDWDKKVAPSAIYEEGAVVFPVLHGPMGEDGSVQGFLEVLKMPYVGCNILSSSLAMDKITTKRVLESAGIAQVPYVAIVEGDDVTAKIAEVEEKLAYPVFTKPSNMGSSVGISKSENQEELRQALKLAFRYDSRVLVEQGVNAREIEVGLLGNYDVKSTLPGEVVKDVAFYDYDAKYIDNKVTMDIPAKISDDVVAVMRQNAETAFRAIGGLGLSRCDFFYTDKGEIFLNELNTMPGFTQWSMYPLLWENMGISYPELIERLVDLAKESFDKREAHLI.

The 203-residue stretch at 131–333 folds into the ATP-grasp domain; it reads KRVLESAGIA…YPELIERLVD (203 aa). An ATP-binding site is contributed by 161–216; it reads EEKLAYPVFTKPSNMGSSVGISKSENQEELRQALKLAFRYDSRVLVEQGVNAREIE. Mg(2+)-binding residues include D287, E300, and N302.

It belongs to the D-alanine--D-alanine ligase family. The cofactor is Mg(2+). Mn(2+) is required as a cofactor.

Its subcellular location is the cytoplasm. The catalysed reaction is 2 D-alanine + ATP = D-alanyl-D-alanine + ADP + phosphate + H(+). Its pathway is cell wall biogenesis; peptidoglycan biosynthesis. Functionally, cell wall formation. This Streptococcus pneumoniae (strain JJA) protein is D-alanine--D-alanine ligase.